A 257-amino-acid chain; its full sequence is AT-hook motif nuclear-localized protein 16 (257 aa).

A disordered region spans residues 1-71 (MAGGTALTPT…SKNKPKPPII (71 aa)). Residues 53–65 (KRPRGRPAGSKNK) constitute a DNA-binding region (a.T hook). Positions 77 to 214 (PNSLRANAVE…DEAASMQNQQ (138 aa)) constitute a PPC domain.

As to quaternary structure, interacts with FVE/MSI4 and MSI5 which are components of HDAC corepressor complexes. Preferentially expressed in the inflorescence meristem and young floral buds, as well as in seedling-stage vegetative meristems. Widely expressed in flowers, roots and stems, with relatively low expression in leaves.

The protein resides in the nucleus. In terms of biological role, transcription factor that specifically binds AT-rich DNA sequences related to the nuclear matrix attachment regions (MARs). Encodes a nuclear matrix protein that acts in the maintenance of genomic integrity by silencing TEs and repeat-containing genes through epigenetic machinery. Acts as a chromatin remodeling factor that modifies the architecture of FLC and FWA chromatin by modulating both H3 acetylation and methylation leading to the regulation of FLC and FWA expression. Negatively regulates floral repressors including MAF4 and MAF5. Plays a transcription activation role in anther development. Regulates the expression of arabinogalactan proteins (AGPs) involved in the formation of the nexine layer of the pollen wall. Binds AGP6, AGP11, AGP23 and AGP40 promoters. This chain is AT-hook motif nuclear-localized protein 16, found in Arabidopsis thaliana (Mouse-ear cress).